Here is an 89-residue protein sequence, read N- to C-terminus: Transcription elongation factor 1 homolog (89 aa).

The Zn(2+) site is built by C25, C28, C49, and C52.

It belongs to the ELOF1 family.

The protein localises to the nucleus. Transcription elongation factor implicated in the maintenance of proper chromatin structure in actively transcribed regions. This chain is Transcription elongation factor 1 homolog, found in Oryza sativa subsp. japonica (Rice).